Reading from the N-terminus, the 79-residue chain is uncharacterized protein (79 aa).

Positions 1–19 (MKYVALAFVLSLVILQISA) are cleaved as a signal peptide.

Nacreous layer of shell (at protein level). Expressed primarily in the mantle with highest level in the mantle pallium and lower level in the mantle edge.

The protein resides in the secreted. This is an uncharacterized protein from Pinctada maxima (Silver-lipped pearl oyster).